The sequence spans 218 residues: MGQKMNPLGFRLGITQNHRSHWFAQQKNYSEDLREDEKISNCIVNYIRRHMRSSSNHGGIARVEIRRKIDLIQVEIHIGFPNLLIENRGRGSEQLRTDVRNMLNPVDGKLNIAIVKVAKPYGEPNILAEFIALQLEDRVSLGRTVKRAIELAEQADIKGIQIQIAGRLDGNEIARVEWAREGRVPLQTIRAKIDHCYYPAQTIYGVLGIKIWIFGDEK.

One can recognise a KH type-2 domain in the interval 47–118; sequence IRRHMRSSSN…KLNIAIVKVA (72 aa).

It belongs to the universal ribosomal protein uS3 family. Part of the 30S ribosomal subunit.

The protein resides in the plastid. It is found in the chloroplast. The polypeptide is Small ribosomal subunit protein uS3c (rps3) (Cycas taitungensis (Prince sago)).